A 280-amino-acid polypeptide reads, in one-letter code: Protein MGF 505-3R (280 aa).

Belongs to the asfivirus MGF 505 family.

Plays a role in virus cell tropism, and may be required for efficient virus replication in macrophages. This chain is Protein MGF 505-3R, found in African swine fever virus (isolate Warthog/Namibia/Wart80/1980) (ASFV).